Here is a 105-residue protein sequence, read N- to C-terminus: N(4)-acetylcytidine amidohydrolase (105 aa).

Residues 8–93 (TFFEFLTPLV…ALIQEIYPNI (86 aa)) enclose the ASCH domain. Catalysis depends on lysine 22, which acts as the Proton acceptor. Threonine 25 (nucleophile) is an active-site residue. The Proton donor role is filled by glutamate 75.

The protein belongs to the N(4)-acetylcytidine amidohydrolase family.

It catalyses the reaction N(4)-acetylcytidine + H2O = cytidine + acetate + H(+). It carries out the reaction N(4)-acetyl-2'-deoxycytidine + H2O = 2'-deoxycytidine + acetate + H(+). The enzyme catalyses N(4)-acetylcytosine + H2O = cytosine + acetate + H(+). Catalyzes the hydrolysis of N(4)-acetylcytidine (ac4C). This Vibrio cholerae serotype O1 (strain ATCC 39315 / El Tor Inaba N16961) protein is N(4)-acetylcytidine amidohydrolase.